The following is a 737-amino-acid chain: Autophagy-related protein 22 (737 aa).

A disordered region spans residues 115 to 154 (RMSPANAGDNSDSYPYGDDTDGDSSSGLPPPRYPGDDTRP). Residues 125-141 (SDSYPYGDDTDGDSSSG) show a composition bias toward low complexity. The next 4 membrane-spanning stretches (helical) occupy residues 166 to 186 (YAFAAEVYVICGIGSFIPILL), 232 to 252 (SFAMYTFSVSVLLQALLVVSI), 264 to 284 (KLLLAFAWIGSACVMAYIFIS), and 289 to 309 (LIGALLAIISNTSFGASFVLL). The tract at residues 327 to 353 (GDYGSPGYATTEEGDDEDDEYQEDSTR) is disordered. The span at 338-349 (EEGDDEDDEYQE) shows a compositional bias: acidic residues. Asn354 carries N-linked (GlcNAc...) asparagine glycosylation. Residues 395–415 (GIGIGYIAGLFLQCVAIAILI) form a helical membrane-spanning segment. Residue Asn419 is glycosylated (N-linked (GlcNAc...) asparagine). The next 7 helical transmembrane spans lie at 426-446 (IVLCVIGAWWAIFTIPAAMWL), 487-507 (LVDIVLFLAGWFLLSDAIATT), 524-544 (WALGMINVISTASGILGAFSW), 559-579 (ILACIALFELIPLYGLMGYLP), 593-613 (WEMYPLAAIYGFVLGGLSGYC), 632-652 (LYAITDKGSSVFGPAIVGAII), and 661-681 (AFWFLAAIVGTPALFIWFINV).

The protein belongs to the ATG22 family.

The protein localises to the vacuole membrane. Its function is as follows. Vacuolar effluxer which mediate the efflux of amino acids resulting from autophagic degradation. The release of autophagic amino acids allows the maintenance of protein synthesis and viability during nitrogen starvation. This chain is Autophagy-related protein 22 (apg-11), found in Neurospora crassa (strain ATCC 24698 / 74-OR23-1A / CBS 708.71 / DSM 1257 / FGSC 987).